Consider the following 125-residue polypeptide: Histone H2A (125 aa).

Positions 1–18 are enriched in basic residues; that stretch reads MSGRGKGGKVKGKSKTRS. Positions 1 to 23 are disordered; that stretch reads MSGRGKGGKVKGKSKTRSSRAGL. Ser-2 carries the N-acetylserine modification. N5-methylglutamine is present on Gln-104.

The protein belongs to the histone H2A family. The nucleosome is a histone octamer containing two molecules each of H2A, H2B, H3 and H4 assembled in one H3-H4 heterotetramer and two H2A-H2B heterodimers. The octamer wraps approximately 147 bp of DNA.

It localises to the nucleus. It is found in the chromosome. In terms of biological role, core component of nucleosome. Nucleosomes wrap and compact DNA into chromatin, limiting DNA accessibility to the cellular machineries which require DNA as a template. Histones thereby play a central role in transcription regulation, DNA repair, DNA replication and chromosomal stability. DNA accessibility is regulated via a complex set of post-translational modifications of histones, also called histone code, and nucleosome remodeling. This chain is Histone H2A, found in Sepia officinalis (Common cuttlefish).